A 589-amino-acid chain; its full sequence is uncharacterized protein (589 aa).

A run of 14 helical transmembrane segments spans residues 90-110 (YIVIPGLMLSIFLAALDQTVI), 128-148 (SWIGTAYSLAETSILPFCGIM), 162-182 (IVLFLFGSAMCGAAQNMLWLV), 189-209 (GIGGGGIMSLVTIVIADITPL), 217-237 (GCMGVTWGVASVMGPLIGGAI), 245-265 (WIFFINLPTGGLSLALLIFFL), 284-304 (FVGIVTITTGVVLFLLGLNIG), 311-331 (AHANVLCYLIFGILCIAGFVV), 355-375 (VMVTSFLHYYIMSTVTYYIPI), 390-410 (VHTLSLAVVSSVVSAISGMGI), 418-438 (YPMIGGWIVLLAGTGSMIAIY), 448-468 (GFLALTAVGIGNLFQPNLIAI), 483-503 (AFMLLRNMGASVGISIGAVIY), and 545-565 (IRTIWIVNCPVAGVGMLLSFF).

Belongs to the major facilitator superfamily. TCR/Tet family.

It is found in the membrane. This is an uncharacterized protein from Schizosaccharomyces pombe (strain 972 / ATCC 24843) (Fission yeast).